The chain runs to 314 residues: Ribosomal protein L11 methyltransferase (314 aa).

Thr163, Gly184, Asp206, and Asn248 together coordinate S-adenosyl-L-methionine.

This sequence belongs to the methyltransferase superfamily. PrmA family.

It is found in the cytoplasm. It catalyses the reaction L-lysyl-[protein] + 3 S-adenosyl-L-methionine = N(6),N(6),N(6)-trimethyl-L-lysyl-[protein] + 3 S-adenosyl-L-homocysteine + 3 H(+). Its function is as follows. Methylates ribosomal protein L11. This is Ribosomal protein L11 methyltransferase from Lactobacillus delbrueckii subsp. bulgaricus (strain ATCC BAA-365 / Lb-18).